The chain runs to 160 residues: SsrA-binding protein (160 aa).

This sequence belongs to the SmpB family.

It localises to the cytoplasm. Its function is as follows. Required for rescue of stalled ribosomes mediated by trans-translation. Binds to transfer-messenger RNA (tmRNA), required for stable association of tmRNA with ribosomes. tmRNA and SmpB together mimic tRNA shape, replacing the anticodon stem-loop with SmpB. tmRNA is encoded by the ssrA gene; the 2 termini fold to resemble tRNA(Ala) and it encodes a 'tag peptide', a short internal open reading frame. During trans-translation Ala-aminoacylated tmRNA acts like a tRNA, entering the A-site of stalled ribosomes, displacing the stalled mRNA. The ribosome then switches to translate the ORF on the tmRNA; the nascent peptide is terminated with the 'tag peptide' encoded by the tmRNA and targeted for degradation. The ribosome is freed to recommence translation, which seems to be the essential function of trans-translation. The polypeptide is SsrA-binding protein (Pectobacterium carotovorum subsp. carotovorum (strain PC1)).